We begin with the raw amino-acid sequence, 300 residues long: Protease HtpX homolog (300 aa).

2 helical membrane-spanning segments follow: residues 5–25 and 41–61; these read IFLLTLTNIAVIFLLTLFISL and TLFLFSMVVGFTGSFISLAIS. H146 provides a ligand contact to Zn(2+). E147 is an active-site residue. Zn(2+) is bound at residue H150. 2 helical membrane passes run 161 to 181 and 196 to 216; these read LLQGVVNTFVVFLSRIIGFFV and IGFYLGMFISEIVLGLLASII. Position 225 (E225) interacts with Zn(2+).

Belongs to the peptidase M48B family. It depends on Zn(2+) as a cofactor.

Its subcellular location is the cell inner membrane. The protein is Protease HtpX homolog of Methylacidiphilum infernorum (isolate V4) (Methylokorus infernorum (strain V4)).